Here is a 345-residue protein sequence, read N- to C-terminus: Calcium uniporter regulatory subunit MCUb, mitochondrial (345 aa).

Residues 1 to 44 (MPGALSGRRMLPSGLCLGRWQLLRTIRARGRGDPRELPSTPQVL) constitute a mitochondrion transit peptide. Residues 188–221 (EIQKRRERHLMAKIDHLQEQLRPLEQVKAAIEAR) are a coiled coil. A run of 2 helical transmembrane segments spans residues 229–249 (LLWAGLALLSVQGGALAWLTW) and 259–279 (PVTFFLSFANSIVFFAYFIIT). Residues 306-334 (FDVEQYNKLKEDLAEATESLESVRRSLRL) are a coiled coil.

It belongs to the MCU (TC 1.A.77) family. In terms of assembly, homooligomer. Associates with the uniplex complex, composed of MCU, MICU1, MICU2 and EMRE/SMDT1, inhibiting its activity. As to expression, detected in lung, brain and heart, and at lower levels in white fat, skeletal muscle and spleen. Detected at very low levels in kidney and liver. Highly expressed in macrophages during the progression of skeletal muscle regeneration.

Its subcellular location is the mitochondrion inner membrane. Functionally, negative regulator of the mitochondrial calcium uniporter (MCU), a channel that mediates calcium uptake into the mitochondrial matrix. MCUB is required to limit mitochondrial calcium overload during stress. Acts as a dominant-negative regulator that displaces MCU from the functional uniplex complex and thereby decreases the association of calcium sensors MICU1 and MICU2, preventing channel gating. Mitochondrial calcium homeostasis plays key roles in mitochondrial metabolism. Acts as an important regulator of mitochondrial metabolism in response to stress in muscle cells: induced in response to fasting, leading to restrict mitochondrial calcium uptake, resulting in reprogramming of mitochondria toward fatty acid oxidation preference. Acts as a regulator of macrophage polarization during skeletal muscle regeneration: inhibition of mitochondrial calcium uptake drives differentiation of macrophages with anti-inflammatory profile, promoting the differentiation and fusion of satellite cells. The chain is Calcium uniporter regulatory subunit MCUb, mitochondrial from Mus musculus (Mouse).